We begin with the raw amino-acid sequence, 570 residues long: Urease subunit alpha (570 aa).

Residues 131–570 form the Urease domain; that stretch reads GGFDSHIHFI…LPMAQRYFLF (440 aa). Residues His-136, His-138, and Lys-219 each contribute to the Ni(2+) site. At Lys-219 the chain carries N6-carboxylysine. Substrate is bound at residue His-221. Ni(2+) is bound by residues His-248 and His-274. His-322 serves as the catalytic Proton donor. Ni(2+) is bound at residue Asp-362.

The protein belongs to the metallo-dependent hydrolases superfamily. Urease alpha subunit family. Heterotrimer of UreA (gamma), UreB (beta) and UreC (alpha) subunits. Three heterotrimers associate to form the active enzyme. Ni cation serves as cofactor. Post-translationally, carboxylation allows a single lysine to coordinate two nickel ions.

The protein resides in the cytoplasm. It catalyses the reaction urea + 2 H2O + H(+) = hydrogencarbonate + 2 NH4(+). It functions in the pathway nitrogen metabolism; urea degradation; CO(2) and NH(3) from urea (urease route): step 1/1. This chain is Urease subunit alpha, found in Beijerinckia indica subsp. indica (strain ATCC 9039 / DSM 1715 / NCIMB 8712).